Here is a 120-residue protein sequence, read N- to C-terminus: Large ribosomal subunit protein uL18 (120 aa).

This sequence belongs to the universal ribosomal protein uL18 family. In terms of assembly, part of the 50S ribosomal subunit; part of the 5S rRNA/L5/L18/L25 subcomplex. Contacts the 5S and 23S rRNAs.

Functionally, this is one of the proteins that bind and probably mediate the attachment of the 5S RNA into the large ribosomal subunit, where it forms part of the central protuberance. The protein is Large ribosomal subunit protein uL18 of Bradyrhizobium sp. (strain ORS 278).